The following is a 178-amino-acid chain: Plasmid transfer protein TraF (178 aa).

The N-terminal stretch at 1–30 is a signal peptide; it reads MSRILKRIAAGVVIAGVAALLLAAGGYAAG.

This sequence belongs to the peptidase S26C family.

It is found in the periplasm. Required for donor-specific phage sensitivity. May be involved in pilus assembly. In Escherichia coli, this protein is Plasmid transfer protein TraF (traF).